A 168-amino-acid polypeptide reads, in one-letter code: Phosphopantetheine adenylyltransferase (168 aa).

Threonine 9 lines the substrate pocket. Residues 9–10 and histidine 17 contribute to the ATP site; that span reads TF. Positions 41, 73, and 87 each coordinate substrate. Residues 88 to 90, glutamate 98, and 123 to 129 each bind ATP; these read GLR and YQFISGT.

The protein belongs to the bacterial CoaD family. In terms of assembly, homohexamer. Mg(2+) is required as a cofactor.

Its subcellular location is the cytoplasm. It catalyses the reaction (R)-4'-phosphopantetheine + ATP + H(+) = 3'-dephospho-CoA + diphosphate. The protein operates within cofactor biosynthesis; coenzyme A biosynthesis; CoA from (R)-pantothenate: step 4/5. Its function is as follows. Reversibly transfers an adenylyl group from ATP to 4'-phosphopantetheine, yielding dephospho-CoA (dPCoA) and pyrophosphate. This chain is Phosphopantetheine adenylyltransferase, found in Ralstonia nicotianae (strain ATCC BAA-1114 / GMI1000) (Ralstonia solanacearum).